The following is a 46-amino-acid chain: uncharacterized protein (46 aa).

Positions 1 to 46 (MEVTPLETGRARSHQKASTAAQPHAADEKMTGSTARRYLSQDHQSV) are disordered.

This is an uncharacterized protein from Treponema pallidum (strain Nichols).